Here is a 414-residue protein sequence, read N- to C-terminus: Succinylornithine transaminase (414 aa).

At K260 the chain carries N6-(pyridoxal phosphate)lysine.

Belongs to the class-III pyridoxal-phosphate-dependent aminotransferase family. AstC subfamily. The cofactor is pyridoxal 5'-phosphate.

The enzyme catalyses N(2)-succinyl-L-ornithine + 2-oxoglutarate = N-succinyl-L-glutamate 5-semialdehyde + L-glutamate. It functions in the pathway amino-acid degradation; L-arginine degradation via AST pathway; L-glutamate and succinate from L-arginine: step 3/5. Its function is as follows. Catalyzes the transamination of N(2)-succinylornithine and alpha-ketoglutarate into N(2)-succinylglutamate semialdehyde and glutamate. Can also act as an acetylornithine aminotransferase. The polypeptide is Succinylornithine transaminase (Yersinia enterocolitica serotype O:8 / biotype 1B (strain NCTC 13174 / 8081)).